Here is a 224-residue protein sequence, read N- to C-terminus: Ribonuclease 3 (224 aa).

The RNase III domain maps to 4–127; the sequence is IEKLERSLTY…IIGAIHLEAG (124 aa). Glu-40 is a binding site for Mg(2+). Asp-44 is an active-site residue. Mg(2+) contacts are provided by Asp-113 and Glu-116. Glu-116 is an active-site residue. Residues 154 to 223 form the DRBM domain; it reads DYKTKLQEIT…AKIALEKLGA (70 aa).

It belongs to the ribonuclease III family. In terms of assembly, homodimer. It depends on Mg(2+) as a cofactor.

It localises to the cytoplasm. It carries out the reaction Endonucleolytic cleavage to 5'-phosphomonoester.. Digests double-stranded RNA. Involved in the processing of primary rRNA transcript to yield the immediate precursors to the large and small rRNAs (23S and 16S). Processes some mRNAs, and tRNAs when they are encoded in the rRNA operon. Processes pre-crRNA and tracrRNA of type II CRISPR loci if present in the organism. The protein is Ribonuclease 3 of Campylobacter jejuni (strain RM1221).